Here is a 79-residue protein sequence, read N- to C-terminus: Conotoxin Vi6.9 (79 aa).

An N-terminal signal peptide occupies residues 1–22; it reads MKLTCMVIITVLFLTASQLITA. A propeptide spanning residues 23–47 is cleaved from the precursor; the sequence is DYSRDQRQYRAVRLGDEMRNFKGAR. Disulfide bonds link Cys-49–Cys-62, Cys-56–Cys-67, and Cys-61–Cys-77. 4-hydroxyproline occurs at positions 60 and 63.

It belongs to the conotoxin O1 superfamily. Expressed by the venom duct.

It is found in the secreted. Ion channel inhibitor that inhibits the increase in intracellular calcium upon depolarization in DRG neurons. In vivo, both intraperitoneal and intracranial injections into mice induce hyperactivity. This is Conotoxin Vi6.9 from Conus virgo (Virgin cone).